Consider the following 184-residue polypeptide: ATP synthase subunit b, chloroplastic (184 aa).

A helical membrane pass occupies residues 27-49 (LATNPINLSVVLGVLIFFGKGVL).

This sequence belongs to the ATPase B chain family. As to quaternary structure, F-type ATPases have 2 components, F(1) - the catalytic core - and F(0) - the membrane proton channel. F(1) has five subunits: alpha(3), beta(3), gamma(1), delta(1), epsilon(1). F(0) has four main subunits: a(1), b(1), b'(1) and c(10-14). The alpha and beta chains form an alternating ring which encloses part of the gamma chain. F(1) is attached to F(0) by a central stalk formed by the gamma and epsilon chains, while a peripheral stalk is formed by the delta, b and b' chains.

The protein localises to the plastid. It localises to the chloroplast thylakoid membrane. Its function is as follows. F(1)F(0) ATP synthase produces ATP from ADP in the presence of a proton or sodium gradient. F-type ATPases consist of two structural domains, F(1) containing the extramembraneous catalytic core and F(0) containing the membrane proton channel, linked together by a central stalk and a peripheral stalk. During catalysis, ATP synthesis in the catalytic domain of F(1) is coupled via a rotary mechanism of the central stalk subunits to proton translocation. In terms of biological role, component of the F(0) channel, it forms part of the peripheral stalk, linking F(1) to F(0). The chain is ATP synthase subunit b, chloroplastic from Buxus microphylla (Littleleaf boxwood).